Reading from the N-terminus, the 176-residue chain is ATP-dependent protease subunit HslV (176 aa).

T2 is an active-site residue. Na(+) contacts are provided by G157, C160, and T163.

It belongs to the peptidase T1B family. HslV subfamily. In terms of assembly, a double ring-shaped homohexamer of HslV is capped on each side by a ring-shaped HslU homohexamer. The assembly of the HslU/HslV complex is dependent on binding of ATP.

The protein localises to the cytoplasm. The catalysed reaction is ATP-dependent cleavage of peptide bonds with broad specificity.. Allosterically activated by HslU binding. In terms of biological role, protease subunit of a proteasome-like degradation complex believed to be a general protein degrading machinery. The chain is ATP-dependent protease subunit HslV from Pectobacterium atrosepticum (strain SCRI 1043 / ATCC BAA-672) (Erwinia carotovora subsp. atroseptica).